Reading from the N-terminus, the 1368-residue chain is Indole-3-acetaldehyde oxidase (1368 aa).

The 90-residue stretch at 19-108 (TSLVFAINGQ…GCSITTSDGL (90 aa)) folds into the 2Fe-2S ferredoxin-type domain. [2Fe-2S] cluster contacts are provided by Cys60, Cys65, and Cys68. In terms of domain architecture, FAD-binding PCMH-type spans 246–427 (LHSRKYRWSS…LSLEIPSWHS (182 aa)).

Belongs to the xanthine dehydrogenase family. In terms of assembly, aldehyde oxidases (AO) are homodimers and heterodimers of AO subunits. AO-alpha is an AAO1 homodimer; AO-beta is an AAO1-AAO2 heterodimer. [2Fe-2S] cluster is required as a cofactor. The cofactor is FAD. Mo-molybdopterin serves as cofactor. As to expression, predominantly expressed in roots, seedlings, mature siliques and seeds, and to lower extent in stems and rosettes. In seedlings, mostly expressed in lower part of hypocotyls and roots.

The protein resides in the cytoplasm. The catalysed reaction is indole-3-acetaldehyde + O2 + H2O = (indol-3-yl)acetate + H2O2 + H(+). Its activity is regulated as follows. Strongly inhibited by iodoacetate and potassium cyanide (KCN). Weakly inhibited by 2-mercaptoethanol, dithiothreitol (DTT), menadione, estradiol, 4'-(9-acridinylamino)methanesulfon-m-anisidine (mAMSA), allopurinol and tritonX-100. Not affected by p-chloromercuribenzoate. Functionally, in higher plants aldehyde oxidases (AO) appear to be homo- and heterodimeric assemblies of AO subunits with probably different physiological functions. AO-alpha may be involved in the biosynthesis of auxin, and in biosynthesis of abscisic acid (ABA) in seeds. In vitro, AO-alpha uses heptaldehyde, protocatechualdehyde, benzaldehyde, indole-3-aldehyde (IAld), indole-3-acetaldehyde (IAAld), cinnamaldehyde and citral as substrates; AO-beta uses IAAld, IAld and naphtaldehyde as substrates. The protein is Indole-3-acetaldehyde oxidase (AAO1) of Arabidopsis thaliana (Mouse-ear cress).